Here is a 507-residue protein sequence, read N- to C-terminus: Maturase K (507 aa).

This sequence belongs to the intron maturase 2 family. MatK subfamily.

It localises to the plastid. Its subcellular location is the chloroplast. Usually encoded in the trnK tRNA gene intron. Probably assists in splicing its own and other chloroplast group II introns. This chain is Maturase K, found in Lyonia ligustrina (Maleberry).